The following is a 21-amino-acid chain: Peptide PGLa-R3 (21 aa).

L21 is modified (leucine amide).

In terms of tissue distribution, expressed by the skin glands.

The protein resides in the secreted. Its function is as follows. Antimicrobial peptide. The protein is Peptide PGLa-R3 of Xenopus ruwenzoriensis (Uganda clawed frog).